The following is a 481-amino-acid chain: UDP-glycosyltransferase 72B3 (481 aa).

UDP-alpha-D-glucose is bound by residues S277, A347–Q349, H364–E372, and Y386–Q389.

Belongs to the UDP-glycosyltransferase family.

Possesses low quercetin 3-O-glucosyltransferase activity in vitro. In Arabidopsis thaliana (Mouse-ear cress), this protein is UDP-glycosyltransferase 72B3 (UGT72B3).